The chain runs to 426 residues: Histidine--tRNA ligase (426 aa).

It belongs to the class-II aminoacyl-tRNA synthetase family.

The protein resides in the cytoplasm. The enzyme catalyses tRNA(His) + L-histidine + ATP = L-histidyl-tRNA(His) + AMP + diphosphate + H(+). The protein is Histidine--tRNA ligase of Sulfurisphaera tokodaii (strain DSM 16993 / JCM 10545 / NBRC 100140 / 7) (Sulfolobus tokodaii).